The sequence spans 76 residues: uncharacterized protein (76 aa).

It belongs to the IIV-6 342R family.

This is an uncharacterized protein from Invertebrate iridescent virus 3 (IIV-3).